The following is a 168-amino-acid chain: Mesencephalic astrocyte-derived neurotrophic factor homolog (168 aa).

An N-terminal signal peptide occupies residues 1–17; it reads MSRLVLLISLVIVVASA. Cystine bridges form between Cys-22/Cys-109, Cys-25/Cys-97, Cys-55/Cys-66, and Cys-143/Cys-146.

The protein belongs to the ARMET family. Expressed in the intestine, spermatheca and nervous system. Expressed in the hypoderm. Expressed in structures of the excretory system. Not expressed in the male gonad.

Its subcellular location is the secreted. It is found in the endoplasmic reticulum lumen. Functionally, inhibits endoplasmic reticulum (ER) stress response. Retained in the ER under normal conditions and is up-regulated and secreted by the ER in response to ER stress and hypoxia. Following secretion by the ER, directly binds to 3-O-sulfogalactosylceramide, a lipid sulfatide in the outer cell membrane of target cells. Sulfatide binding promotes its cellular uptake by endocytosis, and is required for its role in alleviating ER stress under ER stress conditions. Has a neuroprotective role, ensuring survival of dopaminergic neurons during normal growth. The protein is Mesencephalic astrocyte-derived neurotrophic factor homolog of Caenorhabditis elegans.